The following is a 255-amino-acid chain: mRNA 3'-end-processing protein YTH1 (255 aa).

5 C3H1-type zinc fingers span residues S37–D64, G73–N100, L101–P129, Q130–R157, and L159–W182. Residues H179–R227 are compositionally biased toward basic and acidic residues. A disordered region spans residues H179–H255. Residues H238 to H255 are compositionally biased toward basic residues.

This sequence belongs to the CPSF4/YTH1 family.

It localises to the nucleus. Its function is as follows. Component of the cleavage factor I (CF I) involved in pre-mRNA 3'-end processing. This Gibberella zeae (strain ATCC MYA-4620 / CBS 123657 / FGSC 9075 / NRRL 31084 / PH-1) (Wheat head blight fungus) protein is mRNA 3'-end-processing protein YTH1 (YTH1).